We begin with the raw amino-acid sequence, 102 residues long: uncharacterized protein (102 aa).

Residues 7 to 23 (IVFVSCVILGLAACSSQ) form a helical membrane-spanning segment.

The protein resides in the membrane. This is an uncharacterized protein from Haemophilus influenzae (strain ATCC 51907 / DSM 11121 / KW20 / Rd).